We begin with the raw amino-acid sequence, 419 residues long: UDP-N-acetylglucosamine 1-carboxyvinyltransferase (419 aa).

23-24 (KN) lines the phosphoenolpyruvate pocket. Arg92 lines the UDP-N-acetyl-alpha-D-glucosamine pocket. Cys116 acts as the Proton donor in catalysis. A 2-(S-cysteinyl)pyruvic acid O-phosphothioketal modification is found at Cys116. UDP-N-acetyl-alpha-D-glucosamine-binding positions include 121–125 (RPVDL), 161–164 (KVSV), Asp306, and Ile328.

Belongs to the EPSP synthase family. MurA subfamily.

It localises to the cytoplasm. The catalysed reaction is phosphoenolpyruvate + UDP-N-acetyl-alpha-D-glucosamine = UDP-N-acetyl-3-O-(1-carboxyvinyl)-alpha-D-glucosamine + phosphate. Its pathway is cell wall biogenesis; peptidoglycan biosynthesis. Its function is as follows. Cell wall formation. Adds enolpyruvyl to UDP-N-acetylglucosamine. The protein is UDP-N-acetylglucosamine 1-carboxyvinyltransferase of Vibrio cholerae serotype O1 (strain ATCC 39541 / Classical Ogawa 395 / O395).